The primary structure comprises 176 residues: Lipoprotein signal peptidase (176 aa).

Transmembrane regions (helical) follow at residues 10–30, 48–68, 78–98, and 102–122; these read LFQF…AIVL, VPVL…AFSF, YFFT…LLRM, and MVVL…NLID. Active-site residues include aspartate 131 and aspartate 149. Residues 141-161 form a helical membrane-spanning segment; that stretch reads HFPAFNIADSAITLGTILLLI.

This sequence belongs to the peptidase A8 family.

The protein resides in the cell inner membrane. It catalyses the reaction Release of signal peptides from bacterial membrane prolipoproteins. Hydrolyzes -Xaa-Yaa-Zaa-|-(S,diacylglyceryl)Cys-, in which Xaa is hydrophobic (preferably Leu), and Yaa (Ala or Ser) and Zaa (Gly or Ala) have small, neutral side chains.. Its pathway is protein modification; lipoprotein biosynthesis (signal peptide cleavage). Its function is as follows. This protein specifically catalyzes the removal of signal peptides from prolipoproteins. In Acinetobacter baumannii (strain ATCC 17978 / DSM 105126 / CIP 53.77 / LMG 1025 / NCDC KC755 / 5377), this protein is Lipoprotein signal peptidase.